The primary structure comprises 452 residues: Keratin, type I cytoskeletal 42 (452 aa).

Residues 4–93 (TTSIRQFSTS…GVSDALLGGS (90 aa)) are head. Coiled coils occupy residues 93 to 132 (SEKE…WYKK) and 188 to 407 (NLRM…HLAT). A coil 1A region spans residues 94–129 (EKETMQNLNDRLATYLDRVRALEEANTDLEVKIREW). Residues 94–405 (EKETMQNLND…RLLEGEDAHL (312 aa)) enclose the IF rod domain. The segment at 130-147 (YKKQGPGPARDYSPYFKT) is linker 1. The segment at 148 to 239 (IEDLRNKILA…KNHEEEMNAL (92 aa)) is coil 1B. The segment at 240 to 262 (RGQVGGDVNVEMDAAPGVDLSRI) is linker 12. Positions 263–401 (LNEMRDQYEK…ATYRRLLEGE (139 aa)) are coil 2. The segment at 402–452 (DAHLATQYSSSLASQASREGTVTSRQVRTIVEEVQDGKVVSSREQVHRSTH) is tail.

The protein belongs to the intermediate filament family. In terms of assembly, heterodimer of a type I and a type II keratin. Colocalizes with KRT8/KRT18 filament network.

Its subcellular location is the cytoplasm. The sequence is that of Keratin, type I cytoskeletal 42 from Rattus norvegicus (Rat).